Reading from the N-terminus, the 147-residue chain is Cyanate hydratase (147 aa).

Active-site residues include Arg-88, Glu-91, and Ser-114.

This sequence belongs to the cyanase family.

The enzyme catalyses cyanate + hydrogencarbonate + 3 H(+) = NH4(+) + 2 CO2. Catalyzes the reaction of cyanate with bicarbonate to produce ammonia and carbon dioxide. This chain is Cyanate hydratase, found in Polynucleobacter asymbioticus (strain DSM 18221 / CIP 109841 / QLW-P1DMWA-1) (Polynucleobacter necessarius subsp. asymbioticus).